Here is a 262-residue protein sequence, read N- to C-terminus: Hemin import ATP-binding protein HmuV (262 aa).

An ABC transporter domain is found at 5–242 (LEARKAGFAT…ELIGAVFDVE (238 aa)). 37 to 44 (GPNGAGKS) contacts ATP.

Belongs to the ABC transporter superfamily. Heme (hemin) importer (TC 3.A.1.14.5) family. The complex is composed of two ATP-binding proteins (HmuV), two transmembrane proteins (HmuU) and a solute-binding protein (HmuT).

It localises to the cell inner membrane. Its function is as follows. Part of the ABC transporter complex HmuTUV involved in hemin import. Responsible for energy coupling to the transport system. This is Hemin import ATP-binding protein HmuV from Rhodopseudomonas palustris (strain HaA2).